A 341-amino-acid polypeptide reads, in one-letter code: L-threonine 3-dehydrogenase (341 aa).

Cysteine 38 is a Zn(2+) binding site. Active-site charge relay system residues include threonine 40 and histidine 43. Residues histidine 63, glutamate 64, cysteine 93, cysteine 96, cysteine 99, and cysteine 107 each contribute to the Zn(2+) site. Residues isoleucine 175, aspartate 195, arginine 200, 262–264, and 286–287 contribute to the NAD(+) site; these read LGI and IY.

It belongs to the zinc-containing alcohol dehydrogenase family. Homotetramer. The cofactor is Zn(2+).

It localises to the cytoplasm. It catalyses the reaction L-threonine + NAD(+) = (2S)-2-amino-3-oxobutanoate + NADH + H(+). Its pathway is amino-acid degradation; L-threonine degradation via oxydo-reductase pathway; glycine from L-threonine: step 1/2. Catalyzes the NAD(+)-dependent oxidation of L-threonine to 2-amino-3-ketobutyrate. The chain is L-threonine 3-dehydrogenase from Escherichia coli O139:H28 (strain E24377A / ETEC).